Consider the following 382-residue polypeptide: Mannitol-1-phosphate 5-dehydrogenase (382 aa).

NAD(+) is bound at residue 3 to 14 (ALHFGAGNIGRG).

It belongs to the mannitol dehydrogenase family.

It carries out the reaction D-mannitol 1-phosphate + NAD(+) = beta-D-fructose 6-phosphate + NADH + H(+). This is Mannitol-1-phosphate 5-dehydrogenase from Salmonella enteritidis PT4 (strain P125109).